Consider the following 1020-residue polypeptide: Protein SCAR3 (1020 aa).

Disordered stretches follow at residues 167-198, 351-382, and 802-827; these read NLSQGNKKFQKDKKHCKMKKKKTSSRSRDMSR, DEKPSYGEGIGGVDFHSKDNENDKSESGLRKR, and DYLSDNHSLSNSEPWEESSDSHGRKE. A compositionally biased stretch (basic residues) spans 174–191; the sequence is KFQKDKKHCKMKKKKTSS. A compositionally biased stretch (basic and acidic residues) spans 365–382; it reads FHSKDNENDKSESGLRKR. Positions 802 to 814 are enriched in polar residues; the sequence is DYLSDNHSLSNSE. Residues 954-972 form the WH2 domain; that stretch reads ETGDFLQQIRTQQFNLRPV.

The protein belongs to the SCAR/WAVE family. Binds BRK1. Interacts with SPK1, ABI1, ABI2, ABI3 and ABI4. As to expression, expressed in expanding cotyledons, expanding leaves and expanding siliques containing developing embryos. Detected in unopened flower buds. Reduced expression in mature leaves and mature cotyledons.

It is found in the cytoplasm. It localises to the cytoskeleton. In terms of biological role, involved in regulation of actin and microtubule organization. Part of a WAVE complex that activates the Arp2/3 complex. Regulates trichome branch positioning and expansion. The protein is Protein SCAR3 (SCAR3) of Arabidopsis thaliana (Mouse-ear cress).